Here is a 698-residue protein sequence, read N- to C-terminus: Quillaic acid 3-O-glycosyltransferase CSL1 (698 aa).

The chain crosses the membrane as a helical span at residues 14–34; that stretch reads ALLSRLHILFHSALVASVFYY. Residue Asn38 is glycosylated (N-linked (GlcNAc...) asparagine). A helical membrane pass occupies residues 42 to 62; sequence GPAWALMTFAELTLAFIWALT. Residues Lys99 and Glu100 each coordinate UDP-alpha-D-glucose. Asp129 is a catalytic residue. A glycan (N-linked (GlcNAc...) asparagine) is linked at Asn317. The active site involves Ser436. A run of 6 helical transmembrane segments spans residues 478 to 498, 508 to 528, 546 to 566, 581 to 601, 636 to 656, and 669 to 689; these read WTSG…YAMS, YAYF…GVVL, WLLA…YEVL, IWII…MLNK, MFMV…FGGL, and FAQL…MEEI.

The protein belongs to the glycosyltransferase 2 family. Plant cellulose synthase-like G subfamily. In terms of tissue distribution, mainly expressed in flowers and flower buds and, to a lesser extent, in leaves, stems and roots.

It localises to the golgi apparatus membrane. It functions in the pathway secondary metabolite biosynthesis; terpenoid biosynthesis. Component of the oleanane-type triterpene saponins (e.g. saponarioside A and saponarioside B) biosynthetic pathway, leading to the production of natural products with detergent properties used as traditional sources of soap. Glycosyltransferase that mediates the conversion of quillaic acid (QA) to QA-mono via the initiation of the C-3 sugar chain. This Saponaria officinalis (Common soapwort) protein is Quillaic acid 3-O-glycosyltransferase CSL1.